The chain runs to 89 residues: Small ribosomal subunit protein uS15 (89 aa).

It belongs to the universal ribosomal protein uS15 family. As to quaternary structure, part of the 30S ribosomal subunit. Forms a bridge to the 50S subunit in the 70S ribosome, contacting the 23S rRNA.

One of the primary rRNA binding proteins, it binds directly to 16S rRNA where it helps nucleate assembly of the platform of the 30S subunit by binding and bridging several RNA helices of the 16S rRNA. In terms of biological role, forms an intersubunit bridge (bridge B4) with the 23S rRNA of the 50S subunit in the ribosome. This chain is Small ribosomal subunit protein uS15, found in Chlorobium phaeobacteroides (strain BS1).